We begin with the raw amino-acid sequence, 779 residues long: FAD-dependent monooxygenase BOA8 (779 aa).

Residues E85, R128, D331, and A344 each contribute to the FAD site. The next 7 helical transmembrane spans lie at A471–E491, V504–I524, A542–F562, I587–I607, N618–V638, I665–F685, and L742–V762.

It belongs to the paxM FAD-dependent monooxygenase family. FAD serves as cofactor.

Its subcellular location is the membrane. Its pathway is polyketide biosynthesis. In terms of biological role, FAD-dependent monooxygenase; part of the gene cluster B that mediates the biosynthesis of botcinic acid and its botcinin derivatives, acetate-derived polyketides that contribute to virulence when combined with the sesquiterpene botrydial. Botcinic acid and its derivatives have been shown to induce chlorosis and necrosis during host plant infection, but also have antifungal activities. Two polyketide synthases, BOA6 and BOA9, are involved in the biosynthesis of botcinins. BOA6 mediates the formation of the per-methylated tetraketide core by condensation of four units of malonyl-CoA with one unit of acetyl-CoA, which would be methylated in activated methylene groups to yield a bicyclic acid intermediate that could then either be converted to botrylactone derivatives or lose the starter acetate unit through a retro-Claisen type C-C bond cleavage to yield botcinin derivatives. The second polyketide synthase, BOA9, is probably required for the biosynthesis of the tetraketide side chain of botcinins. The methyltransferase (MT) domain within BOA6 is probably responsible for the incorporation of four methyl groups. The trans-enoyl reductase BOA5 might take over the enoyl reductase function of BOA6 that misses an ER domain. The monooxygenases BOA2, BOA3 and BOA4 might be involved in further hydroxylations at C4, C5 and C8, whereas BOA7, close to BOA9, could potentially be involved in the hydroxylation at C4 in the side chain of botcinins. The protein is FAD-dependent monooxygenase BOA8 of Botryotinia fuckeliana (strain B05.10) (Noble rot fungus).